The chain runs to 392 residues: Glutamyl-tRNA(Gln) amidotransferase subunit D (392 aa).

The 324-residue stretch at 68 to 391 (GNLGFIYTGG…DGIKKEMKRL (324 aa)) folds into the Asparaginase/glutaminase domain. Catalysis depends on residues T78, T152, D153, and K229.

This sequence belongs to the asparaginase 1 family. GatD subfamily. In terms of assembly, heterodimer of GatD and GatE.

The enzyme catalyses L-glutamyl-tRNA(Gln) + L-glutamine + ATP + H2O = L-glutaminyl-tRNA(Gln) + L-glutamate + ADP + phosphate + H(+). In terms of biological role, allows the formation of correctly charged Gln-tRNA(Gln) through the transamidation of misacylated Glu-tRNA(Gln) in organisms which lack glutaminyl-tRNA synthetase. The reaction takes place in the presence of glutamine and ATP through an activated gamma-phospho-Glu-tRNA(Gln). The GatDE system is specific for glutamate and does not act on aspartate. The polypeptide is Glutamyl-tRNA(Gln) amidotransferase subunit D (gatD) (Nanoarchaeum equitans (strain Kin4-M)).